The primary structure comprises 544 residues: Cannabidiolic acid synthase (544 aa).

A signal peptide spans 1-28; that stretch reads MKCSTFSFWFVCKIIFFFFSFNIQTSIA. Cys-37 and Cys-99 form a disulfide bridge. N-linked (GlcNAc...) asparagine glycosylation is found at Asn-45 and Asn-65. The 175-residue stretch at 77 to 251 folds into the FAD-binding PCMH-type domain; it reads TTPKPLVIVT…VAWKIRLVAV (175 aa). Residues 109–115 and Ser-120 contribute to the FAD site; that span reads TRSGGHD. The 6-(S-cysteinyl)-8alpha-(pros-histidyl)-FAD (His-Cys) cross-link spans 114-176; the sequence is HDSEGMSYIS…ENLSLAAGYC (63 aa). An N-linked (GlcNAc...) asparagine glycan is attached at Asn-168. FAD-binding positions include Cys-176, 180-184, Tyr-190, Glu-236, and Ile-241; that span reads CAGGH. His-291 provides a ligand contact to cannabigerolate. N-linked (GlcNAc...) asparagine glycans are attached at residues Asn-296, Asn-304, and Asn-328. Cannabigerolate contacts are provided by Tyr-416 and Glu-441. 480–482 serves as a coordination point for FAD; it reads YLN. The active-site Proton acceptor is the Tyr-483. Asn-498 carries an N-linked (GlcNAc...) asparagine glycan.

It belongs to the oxygen-dependent FAD-linked oxidoreductase family. As to quaternary structure, monomer. Requires FAD as cofactor. Post-translationally, glycosylated. In terms of processing, the FAD cofactor is bound via a bicovalent 6-S-cysteinyl, 8alpha-N1-histidyl FAD linkage. In terms of tissue distribution, expressed in young leaves.

It localises to the secreted. It is found in the extracellular space. The protein localises to the apoplast. The catalysed reaction is cannabigerolate + O2 = cannabidiolate + H2O2. It participates in secondary metabolite biosynthesis; terpenoid biosynthesis. With respect to regulation, inhibited by Hg(2+). Functionally, oxidoreductase involved in the biosynthesis of cannabinoids-related terpenophenolic natural products, which have pharmacological activity. Catalyzes the stereoselective oxidative cyclization of the monoterpene moiety in cannabigerolic acid (CBGA), producing cannabidiolate (CBDA), the major cannabioid in fiber-type Cannabis plants. Can also use cannabinerolic acid as substrate, but not cannabigerol or cannabinerol. The protein is Cannabidiolic acid synthase of Cannabis sativa (Hemp).